Reading from the N-terminus, the 523-residue chain is MGSLMQSEPEMEKKPIGIRFLERIKGSKLSYSAYQAIVLIVTFLAYASYHAARKTTSIVKSALDPQSPDTGLNSLLLRFTSFGSSVKEEGGWAPFNGPDGTVLLGEIDVAFLAVYAFGMYFAGHLGDRMNLRIFLTVGMIGTGLFTSLFGVGYWGNIHSFYYFLIMQMLAGLFQSSGWPSVVAVVGNWFNKKKRGLIMGIWNAHTSVGNITGSLIAAAMLRYGWGWSFVVPGVIIVVIGLVNYAFLPVSPENVGAERDEVLDSSSEKIGNSVNEPLLLSSSDSETDDKKRAVGFIEAWRIPGVAPFALCLFFAKLVAYTFLYWLPFYVSHTAIEGEYLSDETAGNLSTMFDVGGVVGGIMAGYISDRIGARAITAASFMYCSIPALFFYRSYGHVSLLANASLMFLTGMLVNGPYALITTAVSADLGTHSSLKGNSRALATVTAIIDGTGSVGAAVGPLLTGYISSRGSWTAVFTMLMGAAFVAGLLLTRLVMAEVAEKIAESRPSEECRSPVDYVQDHVMEV.

Transmembrane regions (helical) follow at residues 29–49 (LSYS…YASY), 102–122 (VLLG…MYFA), 133–153 (IFLT…GVGY), 163–183 (FLIM…SVVA), 196–216 (LIMG…SLIA), 228–248 (FVVP…FLPV), 306–326 (FALC…WLPF), 344–364 (GNLS…AGYI), 368–388 (IGAR…ALFF), 402–422 (SLMF…TTAV), 444–464 (AIID…TGYI), and 468–488 (GSWT…GLLL).

This sequence belongs to the major facilitator superfamily. Organophosphate:Pi antiporter (OPA) (TC 2.A.1.4) family.

It localises to the membrane. The polypeptide is Putative glycerol-3-phosphate transporter 1 (Arabidopsis thaliana (Mouse-ear cress)).